The primary structure comprises 180 residues: MKGTSEVKPMETHRKLLKPLVEKRRRERINNSLEKLRIFLFQTLKSEKLKNPKVEKAEILECTVQFLQSRKLLPLDREAVDKEYQSGFQHCLETTLHFMNSKPDMNGVTKELLSHQMSSCKSPSDAWSPNCAPLTKHVPSLSYQDSAPHLVSNSISISPTKTLVDSHFTYQSFKTWRPWV.

Positions 13–70 (HRKLLKPLVEKRRRERINNSLEKLRIFLFQTLKSEKLKNPKVEKAEILECTVQFLQSR) constitute a bHLH domain. One can recognise an Orange domain in the interval 84-116 (YQSGFQHCLETTLHFMNSKPDMNGVTKELLSHQ). A WRPW motif motif is present at residues 176 to 179 (WRPW).

In terms of assembly, transcription repression requires formation of a complex with a corepressor protein of the Groucho/TLE family. As to expression, expressed in the presumptive midbrain-hindbrain boundary (MHB) as early as the early gastrula stage (stage 10.5). Expression in the MHB continues through to tailbud stage. Also transiently expressed in the eye anlage at late neurula stage.

It localises to the nucleus. Its function is as follows. Transcriptional repressor. Represses transcription from both N box- and E box-containing promoters. Demarcates the prospective midbrain-hindbrain boundary (MHB) region in the neuroectoderm in early gastrulae embryos by repressing transcription of a number of target genes. In Xenopus laevis (African clawed frog), this protein is Transcription factor HES-7.1-A (hes7.1-a).